Reading from the N-terminus, the 499-residue chain is Glycerol kinase 2 (499 aa).

Thr13 provides a ligand contact to ADP. 3 residues coordinate ATP: Thr13, Thr14, and Ser15. Thr13 lines the sn-glycerol 3-phosphate pocket. Arg17 is a binding site for ADP. Arg83, Glu84, Tyr134, and Asp241 together coordinate sn-glycerol 3-phosphate. The glycerol site is built by Arg83, Glu84, Tyr134, Asp241, and Gln242. ADP-binding residues include Thr263 and Gly306. 4 residues coordinate ATP: Thr263, Gly306, Gln310, and Gly407. An ADP-binding site is contributed by Gly407.

This sequence belongs to the FGGY kinase family.

It carries out the reaction glycerol + ATP = sn-glycerol 3-phosphate + ADP + H(+). Its pathway is polyol metabolism; glycerol degradation via glycerol kinase pathway; sn-glycerol 3-phosphate from glycerol: step 1/1. Functionally, key enzyme in the regulation of glycerol uptake and metabolism. Catalyzes the phosphorylation of glycerol to yield sn-glycerol 3-phosphate. The protein is Glycerol kinase 2 of Saccharolobus solfataricus (strain ATCC 35092 / DSM 1617 / JCM 11322 / P2) (Sulfolobus solfataricus).